The sequence spans 479 residues: Preferentially expressed antigen in melanoma-like protein 7 (479 aa).

One copy of the LRR 1; degenerate repeat lies at 96–124; it reads MGRLKKVDFRDAQHHASLDMQDEREGRDY. One copy of the LRR 2; degenerate repeat lies at 179–203; sequence HLCCEKLEIGAVEVSKVRNVLKFLQ. One copy of the LRR 3; degenerate repeat lies at 204 to 230; the sequence is PELIKELKLNTVGNLSKLAKFVPFIRK. Residues 231 to 265 form an LRR 4; degenerate repeat; it reads MRNLQKLMLVRTFGTRTFTQEEKQNISKIISLFCK. 5 LRR repeats span residues 266–291, 292–323, 324–347, 348–375, and 376–400; these read LSCL…LRCL, EAPL…SQLK, HLCL…LKRV, AANL…ALIK, and CTQL…FLHR.

It belongs to the PRAME family. Interacts with UHRF1. Seems to be specific to pluripotent tissues in the early embryo. Not detected in somatic tissues.

Its function is as follows. Promotes maintenance and self-renewal of pluripotent embryonic stem cells (ESCs), downstream of LIF/STAT3. Maintains the pluripotency state of ESCs by repressing DNA methylation through the regulation of UHRF1 stability. Mediates the proteasomal degradation of UHRF1. Is required for the establishment of the blastocyst. This Mus musculus (Mouse) protein is Preferentially expressed antigen in melanoma-like protein 7.